The chain runs to 115 residues: NAD(P)H-quinone oxidoreductase subunit M (115 aa).

This sequence belongs to the complex I NdhM subunit family. NDH-1 can be composed of about 15 different subunits; different subcomplexes with different compositions have been identified which probably have different functions.

It localises to the cellular thylakoid membrane. It catalyses the reaction a plastoquinone + NADH + (n+1) H(+)(in) = a plastoquinol + NAD(+) + n H(+)(out). The enzyme catalyses a plastoquinone + NADPH + (n+1) H(+)(in) = a plastoquinol + NADP(+) + n H(+)(out). NDH-1 shuttles electrons from an unknown electron donor, via FMN and iron-sulfur (Fe-S) centers, to quinones in the respiratory and/or the photosynthetic chain. The immediate electron acceptor for the enzyme in this species is believed to be plastoquinone. Couples the redox reaction to proton translocation, and thus conserves the redox energy in a proton gradient. Cyanobacterial NDH-1 also plays a role in inorganic carbon-concentration. The polypeptide is NAD(P)H-quinone oxidoreductase subunit M (Prochlorococcus marinus (strain MIT 9211)).